Reading from the N-terminus, the 567-residue chain is WD repeat-containing protein 20 (567 aa).

Ala-2 carries the post-translational modification N-acetylalanine. WD repeat units lie at residues 147–187 (IDKS…GTTA), 216–257 (VGEG…GTMK), 258–297 (SYFG…VIAR), and 345–389 (STQS…LFPH). Phosphoserine is present on residues Ser-355 and Ser-358. A disordered region spans residues 408 to 441 (PAGSNGSAVTTPGNSVPPPLPRSNSLPHSAVSNA). Composition is skewed to polar residues over residues 411–421 (SNGSAVTTPGN) and 429–441 (RSNS…VSNA). Ser-430, Ser-432, and Ser-463 each carry phosphoserine. The segment covering 468–481 (KERHHEKDRKRNHS) has biased composition (basic residues). A disordered region spans residues 468-493 (KERHHEKDRKRNHSMGHISSKSSDKL). A WD 5 repeat occupies 529-566 (IAHERLTVLVFLEDCIVTACQEGFICTWARPGKVSKFQ).

In terms of assembly, interacts with USP12; promotes translocation of USP12/WDR20 to the plasma membrane. Component of the USP12/WDR20/WDR48 deubiquitinating complex. Interacts with USP46; contributes to the cytoplasmic localization of the USP46/WDR20 complex. Component of the USP12/DMWD/WDR48 deubiquitinating complex.

The protein localises to the cytoplasm. It localises to the nucleus. Its function is as follows. Regulator of deubiquitinating complexes. Activates deubiquitinating activity of complexes containing USP12. Anchors at the base of the ubiquitin-contacting loop of USP12 and remotely modulates the catalytic center of the enzyme. Regulates shuttling of complexes containing USP12 between the plasma membrane, cytoplasm and nucleus. This is WD repeat-containing protein 20 (Wdr20) from Mus musculus (Mouse).